The following is a 54-amino-acid chain: Lectin alpha chain (54 aa).

Belongs to the leguminous lectin family. As to quaternary structure, tetramer of two alpha and two beta chains.

The chain is Lectin alpha chain from Lathyrus tingitanus (Tangier pea).